A 273-amino-acid polypeptide reads, in one-letter code: Proteasome subunit beta type-10 (273 aa).

Met1 is modified (N-acetylmethionine). A propeptide spans 1–39 (MLKQAVEHRGGFSFENCQRNASLEHVLPGLRVPLARKTG) (removed in mature form). Thr40 functions as the Nucleophile in the catalytic mechanism. The residue at position 230 (Ser230) is a Phosphoserine.

This sequence belongs to the peptidase T1B family. In terms of assembly, the 26S proteasome consists of a 20S proteasome core and two 19S regulatory subunits. The 20S proteasome core is composed of 28 subunits that are arranged in four stacked rings, resulting in a barrel-shaped structure. The two end rings are each formed by seven alpha subunits, and the two central rings are each formed by seven beta subunits. The catalytic chamber with the active sites is on the inside of the barrel. Component of the immunoproteasome, where it displaces the equivalent housekeeping subunit PSMB7. Component of the spermatoproteasome, a form of the proteasome specifically found in testis. Post-translationally, autocleaved. The resulting N-terminal Thr residue of the mature subunit is responsible for the nucleophile proteolytic activity.

The protein localises to the cytoplasm. It localises to the nucleus. It catalyses the reaction Cleavage of peptide bonds with very broad specificity.. The proteasome is a multicatalytic proteinase complex which is characterized by its ability to cleave peptides with Arg, Phe, Tyr, Leu, and Glu adjacent to the leaving group at neutral or slightly basic pH. The proteasome has an ATP-dependent proteolytic activity. This subunit is involved in antigen processing to generate class I binding peptides. This Rattus norvegicus (Rat) protein is Proteasome subunit beta type-10 (Psmb10).